A 304-amino-acid chain; its full sequence is MAGPDIEAVKSYLLDLQESICNALETEEPRARFVEDRWEHAAGGGGRTRVLSGGETFEQGGVNFSHVRGASLPASATAHRPELAGRGFQATGVSLVIHPLNPYVPTSHANVRFFLAEKEGETPIWWFGGGFDLTPFYPFEEDVIHWHRTARNACLPFGEDVYPRFKRWCDEYFFLNHRNETRGVGGLFFDDLNEWGFERSFAFLRSVGDHYLKAYLPIVQRRKAIPYGEREREFQLYRRGRYVEFNLVYDRGTLFGLQSGGRTESILMSLPPVAHWRYDWRPERGSAEENLYLNYLKPKEWLES.

Serine 94 provides a ligand contact to substrate. Residues histidine 98 and histidine 108 each coordinate a divalent metal cation. The Proton donor role is filled by histidine 108. 110–112 contacts substrate; that stretch reads NVR. Histidine 147 and histidine 177 together coordinate a divalent metal cation. Residues 242-277 form an important for dimerization region; the sequence is YVEFNLVYDRGTLFGLQSGGRTESILMSLPPVAHWR. 260-262 provides a ligand contact to substrate; it reads GGR.

Belongs to the aerobic coproporphyrinogen-III oxidase family. As to quaternary structure, homodimer. Requires a divalent metal cation as cofactor.

It localises to the cytoplasm. The enzyme catalyses coproporphyrinogen III + O2 + 2 H(+) = protoporphyrinogen IX + 2 CO2 + 2 H2O. It participates in porphyrin-containing compound metabolism; protoporphyrin-IX biosynthesis; protoporphyrinogen-IX from coproporphyrinogen-III (O2 route): step 1/1. Involved in the heme biosynthesis. Catalyzes the aerobic oxidative decarboxylation of propionate groups of rings A and B of coproporphyrinogen-III to yield the vinyl groups in protoporphyrinogen-IX. The polypeptide is Oxygen-dependent coproporphyrinogen-III oxidase (Methylococcus capsulatus (strain ATCC 33009 / NCIMB 11132 / Bath)).